The chain runs to 157 residues: 2-C-methyl-D-erythritol 2,4-cyclodiphosphate synthase (157 aa).

Positions 8 and 10 each coordinate a divalent metal cation. Residues 8–10 (DVH) and 34–35 (HS) each bind 4-CDP-2-C-methyl-D-erythritol 2-phosphate. Residue His-42 participates in a divalent metal cation binding. 4-CDP-2-C-methyl-D-erythritol 2-phosphate contacts are provided by residues 56–58 (DIG), 132–135 (TTNE), and Arg-142.

It belongs to the IspF family. Homotrimer. The cofactor is a divalent metal cation.

The enzyme catalyses 4-CDP-2-C-methyl-D-erythritol 2-phosphate = 2-C-methyl-D-erythritol 2,4-cyclic diphosphate + CMP. The protein operates within isoprenoid biosynthesis; isopentenyl diphosphate biosynthesis via DXP pathway; isopentenyl diphosphate from 1-deoxy-D-xylulose 5-phosphate: step 4/6. Its function is as follows. Involved in the biosynthesis of isopentenyl diphosphate (IPP) and dimethylallyl diphosphate (DMAPP), two major building blocks of isoprenoid compounds. Catalyzes the conversion of 4-diphosphocytidyl-2-C-methyl-D-erythritol 2-phosphate (CDP-ME2P) to 2-C-methyl-D-erythritol 2,4-cyclodiphosphate (ME-CPP) with a corresponding release of cytidine 5-monophosphate (CMP). The polypeptide is 2-C-methyl-D-erythritol 2,4-cyclodiphosphate synthase (Chlorobaculum tepidum (strain ATCC 49652 / DSM 12025 / NBRC 103806 / TLS) (Chlorobium tepidum)).